The chain runs to 575 residues: MSGNWVHPGQILIWAIWVLAAPTKGPSAEGPQRNTRLGWIQGKQVTVLGSPVPVNVFLGVPFAAPPLGSLRFTNPQPASPWDNLREATSYPNLCLQNSEWLLLDQHMLKVHYPKFGVSEDCLYLNIYAPAHADTGSKLPVLVWFPGGAFKTGSASIFDGSALAAYEDVLVVVVQYRLGIFGFFTTWDQHAPGNWAFKDQVAALSWVQKNIEFFGGDPSSVTIFGESAGAISVSSLILSPMAKGLFHKAIMESGVAIIPYLEAHDYEKSEDLQVVAHFCGNNASDSEALLRCLRTKPSKELLTLSQKTKSFTRVVDGAFFPNEPLDLLSQKAFKAIPSIIGVNNHECGFLLPMKEAPEILSGSNKSLALHLIQNILHIPPQYLHLVANEYFHDKHSLTEIRDSLLDLLGDVFFVVPALITARYHRDAGAPVYFYEFRHRPQCFEDTKPAFVKADHADEVRFVFGGAFLKGDIVMFEGATEEEKLLSRKMMKYWATFARTGNPNGNDLSLWPAYNLTEQYLQLDLNMSLGQRLKEPRVDFWTSTIPLILSASDMLHSPLSSLTFLSLLQPFFFFCAP.

A signal peptide spans 1-20 (MSGNWVHPGQILIWAIWVLA). A disulfide bridge links Cys94 with Cys121. The active-site Acyl-ester intermediate is the Ser226. Asn281 carries N-linked (GlcNAc...) asparagine glycosylation. Residue Glu345 is the Charge relay system of the active site. A glycan (N-linked (GlcNAc...) asparagine) is linked at Asn363. His454 acts as the Charge relay system in catalysis. N-linked (GlcNAc...) asparagine glycosylation is found at Asn513 and Asn524.

The protein belongs to the type-B carboxylesterase/lipase family. N-glycosylated.

The protein localises to the secreted. It carries out the reaction a carboxylic ester + H2O = an alcohol + a carboxylate + H(+). In terms of biological role, involved in the detoxification of xenobiotics and in the activation of ester and amide prodrugs. This is Carboxylesterase 5A (CES5A) from Homo sapiens (Human).